Consider the following 167-residue polypeptide: SsrA-binding protein (167 aa).

The segment at Gln-139 to Ala-167 is disordered. Positions Arg-144–Arg-158 are enriched in basic and acidic residues.

This sequence belongs to the SmpB family.

It is found in the cytoplasm. Required for rescue of stalled ribosomes mediated by trans-translation. Binds to transfer-messenger RNA (tmRNA), required for stable association of tmRNA with ribosomes. tmRNA and SmpB together mimic tRNA shape, replacing the anticodon stem-loop with SmpB. tmRNA is encoded by the ssrA gene; the 2 termini fold to resemble tRNA(Ala) and it encodes a 'tag peptide', a short internal open reading frame. During trans-translation Ala-aminoacylated tmRNA acts like a tRNA, entering the A-site of stalled ribosomes, displacing the stalled mRNA. The ribosome then switches to translate the ORF on the tmRNA; the nascent peptide is terminated with the 'tag peptide' encoded by the tmRNA and targeted for degradation. The ribosome is freed to recommence translation, which seems to be the essential function of trans-translation. This chain is SsrA-binding protein, found in Xylella fastidiosa (strain 9a5c).